The chain runs to 638 residues: Threonine--tRNA ligase (638 aa).

A TGS domain is found at 1 to 61; it reads MVAITLPDGK…DRDVNLSIIT (61 aa). Positions 244-536 are catalytic; sequence DHRRLGREME…LIENFAGRFP (293 aa). Residues cysteine 336, histidine 387, and histidine 513 each contribute to the Zn(2+) site.

It belongs to the class-II aminoacyl-tRNA synthetase family. As to quaternary structure, homodimer. The cofactor is Zn(2+).

It localises to the cytoplasm. The enzyme catalyses tRNA(Thr) + L-threonine + ATP = L-threonyl-tRNA(Thr) + AMP + diphosphate + H(+). Its function is as follows. Catalyzes the attachment of threonine to tRNA(Thr) in a two-step reaction: L-threonine is first activated by ATP to form Thr-AMP and then transferred to the acceptor end of tRNA(Thr). Also edits incorrectly charged L-seryl-tRNA(Thr). The chain is Threonine--tRNA ligase from Paramagnetospirillum magneticum (strain ATCC 700264 / AMB-1) (Magnetospirillum magneticum).